The sequence spans 205 residues: Molybdenum cofactor guanylyltransferase (205 aa).

Residues 14–16 (LAG), Lys-27, Asp-77, and Asp-107 each bind GTP. A Mg(2+)-binding site is contributed by Asp-107.

It belongs to the MobA family. As to quaternary structure, monomer. It depends on Mg(2+) as a cofactor.

Its subcellular location is the cytoplasm. The enzyme catalyses Mo-molybdopterin + GTP + H(+) = Mo-molybdopterin guanine dinucleotide + diphosphate. In terms of biological role, transfers a GMP moiety from GTP to Mo-molybdopterin (Mo-MPT) cofactor (Moco or molybdenum cofactor) to form Mo-molybdopterin guanine dinucleotide (Mo-MGD) cofactor. The protein is Molybdenum cofactor guanylyltransferase of Burkholderia vietnamiensis (strain G4 / LMG 22486) (Burkholderia cepacia (strain R1808)).